A 136-amino-acid polypeptide reads, in one-letter code: Protein scalloped (136 aa).

It is found in the nucleus. In terms of biological role, probable transcription factor that function in the regulation of cell-specific gene expression during drosophila development, particularly in the differentiation of the nervous system. This chain is Protein scalloped (SD), found in Junonia coenia (Peacock butterfly).